Consider the following 558-residue polypeptide: Nucleoprotein (558 aa).

The interval 54-237 is binding site for the cap structure m7GTP; it reads MRKEKRDDKD…ITEQQSSINI (184 aa). Mg(2+) contacts are provided by aspartate 382 and glutamate 384. Positions 382 and 384 each coordinate Mn(2+). Residues glutamate 392, cysteine 499, histidine 502, and cysteine 518 each coordinate Zn(2+). Aspartate 522 contributes to the Mg(2+) binding site. A Mn(2+)-binding site is contributed by aspartate 522.

Belongs to the arenaviridae nucleocapsid protein family. In terms of assembly, homomultimerizes to form the nucleocapsid. Binds to viral genomic RNA. Interacts with glycoprotein G2. Interacts with protein Z; this interaction probably directs the encapsidated genome to budding sites. Interacts with protein L; this interaction does not interfere with Z-L interaction. Interacts with host IKBKE (via Protein kinase domain); the interaction inhibits IKBKE kinase activity.

The protein resides in the virion. It is found in the host cytoplasm. In terms of biological role, encapsidates the genome, protecting it from nucleases. The encapsidated genomic RNA is termed the nucleocapsid (NC). Serves as template for viral transcription and replication. The increased presence of protein N in host cell does not seem to trigger the switch from transcription to replication as observed in other negative strain RNA viruses. Through the interaction with host IKBKE, strongly inhibits the phosphorylation and nuclear translocation of host IRF3, a protein involved in interferon activation pathway, leading to the inhibition of interferon-beta and IRF3-dependent promoters activation. Also encodes a functional 3'-5' exoribonuclease that degrades preferentially dsRNA substrates and thereby participates in the suppression of interferon induction. This Lymphocytic choriomeningitis virus (strain Armstrong) (LCMV) protein is Nucleoprotein.